Reading from the N-terminus, the 728-residue chain is Catalase-peroxidase 1 (728 aa).

The tryptophyl-tyrosyl-methioninium (Trp-Tyr) (with M-244) cross-link spans 91 to 218; sequence WHSAGTYRTA…LAAVQMGLIY (128 aa). The active-site Proton acceptor is H92. Residues 218 to 244 constitute a cross-link (tryptophyl-tyrosyl-methioninium (Tyr-Met) (with W-91)); sequence YVNPEGPDGNPDPVAAAHDIRETFARM. H259 serves as a coordination point for heme b.

It belongs to the peroxidase family. Peroxidase/catalase subfamily. As to quaternary structure, homodimer or homotetramer. Requires heme b as cofactor. Post-translationally, formation of the three residue Trp-Tyr-Met cross-link is important for the catalase, but not the peroxidase activity of the enzyme.

The enzyme catalyses H2O2 + AH2 = A + 2 H2O. The catalysed reaction is 2 H2O2 = O2 + 2 H2O. Bifunctional enzyme with both catalase and broad-spectrum peroxidase activity. This is Catalase-peroxidase 1 from Burkholderia cenocepacia (strain HI2424).